The primary structure comprises 1551 residues: Pentafunctional AROM polypeptide (1551 aa).

The 3-dehydroquinate synthase stretch occupies residues 1-379 (MSIEKVPILG…YQLKAHEVSK (379 aa)). Residues 42–44 (DTN), 80–83 (ENNK), 111–113 (GGV), and Asp116 contribute to the NAD(+) site. Arg127 serves as a coordination point for 7-phospho-2-dehydro-3-deoxy-D-arabino-heptonate. 136 to 137 (TT) lines the NAD(+) pocket. 7-phospho-2-dehydro-3-deoxy-D-arabino-heptonate is bound by residues Asp143 and Lys149. Lys158 is an NAD(+) binding site. Residue Asn159 coordinates 7-phospho-2-dehydro-3-deoxy-D-arabino-heptonate. NAD(+) contacts are provided by residues 176-179 (YLES) and Asn187. Glu191 serves as a coordination point for Zn(2+). Residues 191-194 (EVVK) and Lys243 each bind 7-phospho-2-dehydro-3-deoxy-D-arabino-heptonate. Residue Glu253 is the Proton acceptor; for 3-dehydroquinate synthase activity of the active site. 7-phospho-2-dehydro-3-deoxy-D-arabino-heptonate-binding positions include 257 to 261 (RNLLN) and His264. His264 contributes to the Zn(2+) binding site. The Proton acceptor; for 3-dehydroquinate synthase activity role is filled by His268. 7-phospho-2-dehydro-3-deoxy-D-arabino-heptonate-binding residues include His280 and Lys351. His280 lines the Zn(2+) pocket. Residues 392–838 (VHPFKQPPQE…WDILHSKFNI (447 aa)) form an EPSP synthase region. A shikimate kinase region spans residues 858–1048 (DKSIIIIGMR…IPSGRSAALS (191 aa)). An ATP-binding site is contributed by 865 to 872 (GMRGTGKS). The interval 1049 to 1258 (LTVPDLNAIS…NEDGLLTIKE (210 aa)) is 3-dehydroquinase. Residue Lys1194 is the Schiff-base intermediate with substrate; for 3-dehydroquinate dehydratase activity of the active site. The shikimate dehydrogenase stretch occupies residues 1271-1551 (AKKFWVIGSP…DVIHRAVVEE (281 aa)).

This sequence in the N-terminal section; belongs to the sugar phosphate cyclases superfamily. Dehydroquinate synthase family. In the 2nd section; belongs to the EPSP synthase family. The protein in the 3rd section; belongs to the shikimate kinase family. It in the 4th section; belongs to the type-I 3-dehydroquinase family. This sequence in the C-terminal section; belongs to the shikimate dehydrogenase family. Homodimer. Zn(2+) is required as a cofactor.

Its subcellular location is the cytoplasm. It carries out the reaction 7-phospho-2-dehydro-3-deoxy-D-arabino-heptonate = 3-dehydroquinate + phosphate. The catalysed reaction is 3-dehydroquinate = 3-dehydroshikimate + H2O. It catalyses the reaction shikimate + NADP(+) = 3-dehydroshikimate + NADPH + H(+). The enzyme catalyses shikimate + ATP = 3-phosphoshikimate + ADP + H(+). It carries out the reaction 3-phosphoshikimate + phosphoenolpyruvate = 5-O-(1-carboxyvinyl)-3-phosphoshikimate + phosphate. The protein operates within metabolic intermediate biosynthesis; chorismate biosynthesis; chorismate from D-erythrose 4-phosphate and phosphoenolpyruvate: step 2/7. It functions in the pathway metabolic intermediate biosynthesis; chorismate biosynthesis; chorismate from D-erythrose 4-phosphate and phosphoenolpyruvate: step 3/7. It participates in metabolic intermediate biosynthesis; chorismate biosynthesis; chorismate from D-erythrose 4-phosphate and phosphoenolpyruvate: step 4/7. Its pathway is metabolic intermediate biosynthesis; chorismate biosynthesis; chorismate from D-erythrose 4-phosphate and phosphoenolpyruvate: step 5/7. The protein operates within metabolic intermediate biosynthesis; chorismate biosynthesis; chorismate from D-erythrose 4-phosphate and phosphoenolpyruvate: step 6/7. In terms of biological role, the AROM polypeptide catalyzes 5 consecutive enzymatic reactions in prechorismate polyaromatic amino acid biosynthesis. This is Pentafunctional AROM polypeptide from Candida tropicalis (strain ATCC MYA-3404 / T1) (Yeast).